The sequence spans 422 residues: Serine protease HTRA2, mitochondrial (422 aa).

Residues M1–I17 constitute a mitochondrion transit peptide. Positions A18–G74 are excised as a propeptide. A disordered region spans residues S24 to R56. Over residues P41–Q51 the composition is skewed to polar residues. A helical membrane pass occupies residues L64–I82. 2 short sequence motifs (IAP-binding) span residues A75 to S78 and S94 to T97. The segment at S139 to L302 is serine protease. Active-site charge relay system residues include H157, D189, and S266. The PDZ domain maps to M325–V410.

Belongs to the peptidase S1C family. As to quaternary structure, interacts with th/DIAP1 (via BIR 2 domain).

It localises to the mitochondrion intermembrane space. It is found in the mitochondrion membrane. The enzyme catalyses Cleavage of non-polar aliphatic amino-acids at the P1 position, with a preference for Val, Ile and Met. At the P2 and P3 positions, Arg is selected most strongly with a secondary preference for other hydrophilic residues.. Functionally, serine protease that shows proteolytic activity against a non-specific substrate beta-casein. Promotes or induces cell death either by direct binding to and inhibition of BIRC proteins (also called inhibitor of apoptosis proteins, IAPs), leading to an increase in caspase activity, or by a BIRC inhibition-independent, caspase-independent and serine protease activity-dependent mechanism. Can antagonize antiapoptotic activity of th/Diap1 by directly inducing the degradation of th/Diap1. This is Serine protease HTRA2, mitochondrial from Drosophila erecta (Fruit fly).